Here is a 500-residue protein sequence, read N- to C-terminus: Phenylalanine--tRNA ligase alpha subunit (500 aa).

Residues Thr343, 382-384 (QID), and Phe423 contribute to the L-phenylalanine site. Glu425 contacts Mg(2+). An L-phenylalanine-binding site is contributed by Phe448.

The protein belongs to the class-II aminoacyl-tRNA synthetase family. Phe-tRNA synthetase alpha subunit type 2 subfamily. Tetramer of two alpha and two beta subunits. Mg(2+) serves as cofactor.

Its subcellular location is the cytoplasm. It catalyses the reaction tRNA(Phe) + L-phenylalanine + ATP = L-phenylalanyl-tRNA(Phe) + AMP + diphosphate + H(+). The polypeptide is Phenylalanine--tRNA ligase alpha subunit (Pyrococcus abyssi (strain GE5 / Orsay)).